A 241-amino-acid chain; its full sequence is ATP synthase subunit a (241 aa).

5 helical membrane passes run 30-50, 91-111, 128-148, 193-213, and 214-234; these read GQVF…ISVG, FIGT…LIPW, INTT…AGLS, LVVG…VMFL, and GLFT…YYIG.

This sequence belongs to the ATPase A chain family. In terms of assembly, F-type ATPases have 2 components, CF(1) - the catalytic core - and CF(0) - the membrane proton channel. CF(1) has five subunits: alpha(3), beta(3), gamma(1), delta(1), epsilon(1). CF(0) has four main subunits: a, b, b' and c.

It is found in the cellular thylakoid membrane. Functionally, key component of the proton channel; it plays a direct role in the translocation of protons across the membrane. The chain is ATP synthase subunit a from Prochlorococcus marinus subsp. pastoris (strain CCMP1986 / NIES-2087 / MED4).